A 376-amino-acid chain; its full sequence is Chaperone protein DnaJ (376 aa).

Residues 4-70 (DYYQILGVSK…QKRAAYDRFG (67 aa)) form the J domain. Residues 139–217 (GVEKNISFSS…CHGLGRYHKQ (79 aa)) form a CR-type zinc finger. Zn(2+) contacts are provided by Cys152, Cys155, Cys169, Cys172, Cys191, Cys194, Cys205, and Cys208. CXXCXGXG motif repeat units lie at residues 152–159 (CDTCHGSG), 169–176 (CDACGGVG), 191–198 (CHKCQGNG), and 205–212 (CKKCHGLG).

Belongs to the DnaJ family. As to quaternary structure, homodimer. The cofactor is Zn(2+).

Its subcellular location is the cytoplasm. In terms of biological role, participates actively in the response to hyperosmotic and heat shock by preventing the aggregation of stress-denatured proteins and by disaggregating proteins, also in an autonomous, DnaK-independent fashion. Unfolded proteins bind initially to DnaJ; upon interaction with the DnaJ-bound protein, DnaK hydrolyzes its bound ATP, resulting in the formation of a stable complex. GrpE releases ADP from DnaK; ATP binding to DnaK triggers the release of the substrate protein, thus completing the reaction cycle. Several rounds of ATP-dependent interactions between DnaJ, DnaK and GrpE are required for fully efficient folding. Also involved, together with DnaK and GrpE, in the DNA replication of plasmids through activation of initiation proteins. This chain is Chaperone protein DnaJ, found in Rickettsia bellii (strain OSU 85-389).